The primary structure comprises 149 residues: Large ribosomal subunit protein bL9 (149 aa).

It belongs to the bacterial ribosomal protein bL9 family.

Functionally, binds to the 23S rRNA. The polypeptide is Large ribosomal subunit protein bL9 (Thermotoga sp. (strain RQ2)).